The chain runs to 905 residues: Translation initiation factor IF-2 (905 aa).

Residues 50–62 are compositionally biased toward basic and acidic residues; that stretch reads HYEAKGGEDKAAE. Positions 50–306 are disordered; that stretch reads HYEAKGGEDK…QKHEVGGVRL (257 aa). The span at 63 to 75 shows a compositional bias: low complexity; that stretch reads KNAPAATPASASK. Over residues 89–125 the composition is skewed to pro residues; the sequence is GPKPSAAPKPGAAPKPGGAPKPGGAPKPGATPKPGGA. Residues 161–171 show a composition bias toward low complexity; sequence PFSTGSSSDRP. Over residues 233–276 the composition is skewed to gly residues; it reads GSGGGGRGRGGRGGGPGHGGPGHGGFRGRGGRRGGTAGAFGRPG. The span at 280 to 290 shows a compositional bias: basic residues; that stretch reads RRGKKSKRQKR. The span at 291 to 302 shows a compositional bias: basic and acidic residues; it reads HEFEEQQKHEVG. One can recognise a tr-type G domain in the interval 401–575; the sequence is KRPPVVTVMG…LTADAALELT (175 aa). Residues 410-417 form a G1 region; it reads GHVDHGKT. 410–417 contributes to the GTP binding site; sequence GHVDHGKT. Residues 435–439 are G2; the sequence is GITQG. The G3 stretch occupies residues 460-463; the sequence is DTPG. Residues 460-464 and 514-517 contribute to the GTP site; these read DTPGH and NKID. Positions 514 to 517 are G4; the sequence is NKID. The G5 stretch occupies residues 550 to 552; that stretch reads SAK.

It belongs to the TRAFAC class translation factor GTPase superfamily. Classic translation factor GTPase family. IF-2 subfamily.

The protein resides in the cytoplasm. In terms of biological role, one of the essential components for the initiation of protein synthesis. Protects formylmethionyl-tRNA from spontaneous hydrolysis and promotes its binding to the 30S ribosomal subunits. Also involved in the hydrolysis of GTP during the formation of the 70S ribosomal complex. The polypeptide is Translation initiation factor IF-2 (Corynebacterium aurimucosum (strain ATCC 700975 / DSM 44827 / CIP 107346 / CN-1) (Corynebacterium nigricans)).